The following is a 467-amino-acid chain: Ribulose bisphosphate carboxylase large chain (467 aa).

K5 is subject to N6,N6,N6-trimethyllysine. Residues N114 and T164 each coordinate substrate. K166 functions as the Proton acceptor in the catalytic mechanism. Residue K168 participates in substrate binding. Residues K192, D194, and E195 each coordinate Mg(2+). Position 192 is an N6-carboxylysine (K192). H285 (proton acceptor) is an active-site residue. Residues R286, H318, and S370 each contribute to the substrate site.

It belongs to the RuBisCO large chain family. Type I subfamily. In terms of assembly, heterohexadecamer of 8 large chains and 8 small chains; disulfide-linked. The disulfide link is formed within the large subunit homodimers. Requires Mg(2+) as cofactor. The disulfide bond which can form in the large chain dimeric partners within the hexadecamer appears to be associated with oxidative stress and protein turnover.

The protein localises to the plastid. The protein resides in the chloroplast. It carries out the reaction 2 (2R)-3-phosphoglycerate + 2 H(+) = D-ribulose 1,5-bisphosphate + CO2 + H2O. The catalysed reaction is D-ribulose 1,5-bisphosphate + O2 = 2-phosphoglycolate + (2R)-3-phosphoglycerate + 2 H(+). Functionally, ruBisCO catalyzes two reactions: the carboxylation of D-ribulose 1,5-bisphosphate, the primary event in carbon dioxide fixation, as well as the oxidative fragmentation of the pentose substrate in the photorespiration process. Both reactions occur simultaneously and in competition at the same active site. The polypeptide is Ribulose bisphosphate carboxylase large chain (Jasminum simplicifolium subsp. suavissimum (Native jasmine)).